A 193-amino-acid chain; its full sequence is Peptidyl-tRNA hydrolase (193 aa).

Residue H17 participates in tRNA binding. Residue H22 is the Proton acceptor of the active site. TRNA-binding residues include F68, N70, and N116.

It belongs to the PTH family. As to quaternary structure, monomer.

It localises to the cytoplasm. The catalysed reaction is an N-acyl-L-alpha-aminoacyl-tRNA + H2O = an N-acyl-L-amino acid + a tRNA + H(+). Its function is as follows. Hydrolyzes ribosome-free peptidyl-tRNAs (with 1 or more amino acids incorporated), which drop off the ribosome during protein synthesis, or as a result of ribosome stalling. Functionally, catalyzes the release of premature peptidyl moieties from peptidyl-tRNA molecules trapped in stalled 50S ribosomal subunits, and thus maintains levels of free tRNAs and 50S ribosomes. The protein is Peptidyl-tRNA hydrolase of Xanthomonas campestris pv. campestris (strain ATCC 33913 / DSM 3586 / NCPPB 528 / LMG 568 / P 25).